The chain runs to 383 residues: Probable mannan endo-1,4-beta-mannosidase A (383 aa).

The first 21 residues, Met-1–Ala-21, serve as a signal peptide directing secretion. The N-linked (GlcNAc...) asparagine glycan is linked to Asn-17. Residue Trp-92 participates in substrate binding. Residue Asn-194 is glycosylated (N-linked (GlcNAc...) asparagine). Asn-205 contacts substrate. Catalysis depends on Glu-206, which acts as the Proton donor. An N-linked (GlcNAc...) asparagine glycan is attached at Asn-263. Position 281 (Tyr-281) interacts with substrate. Catalysis depends on Glu-314, which acts as the Nucleophile. A substrate-binding site is contributed by Trp-344.

This sequence belongs to the glycosyl hydrolase 5 (cellulase A) family.

The protein resides in the secreted. The catalysed reaction is Random hydrolysis of (1-&gt;4)-beta-D-mannosidic linkages in mannans, galactomannans and glucomannans.. Endo-1,4-mannanase, a crucial enzyme for depolymerization of seed galactomannans and wood galactoglucomannans. The protein is Probable mannan endo-1,4-beta-mannosidase A (manA) of Aspergillus niger (strain ATCC MYA-4892 / CBS 513.88 / FGSC A1513).